The sequence spans 495 residues: Bifunctional protein GlmU (495 aa).

A pyrophosphorylase region spans residues 1 to 241 (MTFPGDTAVL…SALVAGVNNR (241 aa)). UDP-N-acetyl-alpha-D-glucosamine contacts are provided by residues 12–15 (LAAG), K26, Q83, 88–89 (GT), 112–114 (SGD), G151, E166, N181, and N239. D114 serves as a coordination point for Mg(2+). A Mg(2+)-binding site is contributed by N239. The linker stretch occupies residues 242 to 262 (VQLAQLASELNRRVVAAHQLA). The segment at 263 to 495 (GVTVVDPATT…TQPPDADQTP (233 aa)) is N-acetyltransferase. UDP-N-acetyl-alpha-D-glucosamine-binding residues include R344 and K362. The active-site Proton acceptor is H374. Positions 377 and 388 each coordinate UDP-N-acetyl-alpha-D-glucosamine. Residues A391, 397 to 398 (NY), S416, and A434 each bind acetyl-CoA. The interval 457 to 495 (IENWVQRKRPGSPAAQASKRASEMACQQPTQPPDADQTP) is disordered. The segment covering 483–495 (QQPTQPPDADQTP) has biased composition (low complexity).

This sequence in the N-terminal section; belongs to the N-acetylglucosamine-1-phosphate uridyltransferase family. The protein in the C-terminal section; belongs to the transferase hexapeptide repeat family. In terms of assembly, homotrimer. Mg(2+) is required as a cofactor.

It is found in the cytoplasm. The enzyme catalyses alpha-D-glucosamine 1-phosphate + acetyl-CoA = N-acetyl-alpha-D-glucosamine 1-phosphate + CoA + H(+). It catalyses the reaction N-acetyl-alpha-D-glucosamine 1-phosphate + UTP + H(+) = UDP-N-acetyl-alpha-D-glucosamine + diphosphate. The protein operates within nucleotide-sugar biosynthesis; UDP-N-acetyl-alpha-D-glucosamine biosynthesis; N-acetyl-alpha-D-glucosamine 1-phosphate from alpha-D-glucosamine 6-phosphate (route II): step 2/2. It functions in the pathway nucleotide-sugar biosynthesis; UDP-N-acetyl-alpha-D-glucosamine biosynthesis; UDP-N-acetyl-alpha-D-glucosamine from N-acetyl-alpha-D-glucosamine 1-phosphate: step 1/1. Its pathway is bacterial outer membrane biogenesis; LPS lipid A biosynthesis. In terms of biological role, catalyzes the last two sequential reactions in the de novo biosynthetic pathway for UDP-N-acetylglucosamine (UDP-GlcNAc). The C-terminal domain catalyzes the transfer of acetyl group from acetyl coenzyme A to glucosamine-1-phosphate (GlcN-1-P) to produce N-acetylglucosamine-1-phosphate (GlcNAc-1-P), which is converted into UDP-GlcNAc by the transfer of uridine 5-monophosphate (from uridine 5-triphosphate), a reaction catalyzed by the N-terminal domain. The protein is Bifunctional protein GlmU of Mycobacterium bovis (strain ATCC BAA-935 / AF2122/97).